The primary structure comprises 195 residues: Calcineurin B homologous protein 1 (195 aa).

Gly2 carries the N-myristoyl glycine lipid modification. A Necessary for association with microtubule and interaction with GAPDH motif is present at residues 2-6 (GSRAS). EF-hand domains are found at residues 26 to 61 (SQIT…AINP), 71 to 106 (FSEG…NGPE), 110 to 145 (SRSN…MVGV), and 151 to 186 (QLGS…VDVE). Residues Asp123, Asp125, Asp127, Lys129, and Glu134 each contribute to the Ca(2+) site. Positions 138–147 (VLRMMVGVNI) match the Nuclear export signal 1 motif. Ca(2+) is bound by residues Asp164, Asp166, Asp168, and Glu175. Positions 176–185 (FVKVLEKVDV) match the Nuclear export signal 2 motif.

Belongs to the calcineurin regulatory subunit family. CHP subfamily. Monomer. Interacts with STK17B; the interaction occurs in a calcium-independent manner and induces the translocation of CHP1 from the Golgi to the nucleus. Interacts with GAPDH; the interaction is direct, occurs in a N-myristoylation-dependent manner and facilitates the ability of CHP1 to bind microtubules. Interacts with KIF1B (via the C-terminal end of the kinesin-motor domain); the interaction occurs in a calcium-dependent manner. Associates (via C-terminal domain) with microtubules; the association occurs with polymerized microtubules during the cell cycle in a myristoylation- and calcium-independent manner and is enhanced by GAPDH. Interacts with PPP3CA. Interacts with SLC9A1/NHE1 (via the cytoplasmic C-terminal domain); the interaction occurs at the plasma membrane in a calcium-dependent manner and at a domain that is critical for growth factor stimulation of the exchanger. Interacts with SLC9A3; increases SLC9A3 trafficking and activity at the plasma membrane. Phosphorylated; decreased phosphorylation is associated with an increase in SLC9A1/NHE1 Na(+)/H(+) exchange activity. Phosphorylation occurs in serum-dependent manner. The phosphorylation state may regulate the binding to SLC9A1/NHE1. In terms of processing, both N-myristoylation and calcium-mediated conformational changes are essential for its function in exocytic traffic. N-myristoylation is required for its association with microtubules and interaction with GAPDH, but not for the constitutive association to membranes.

It is found in the nucleus. The protein localises to the cytoplasm. Its subcellular location is the cytoskeleton. It localises to the endomembrane system. The protein resides in the endoplasmic reticulum-Golgi intermediate compartment. It is found in the endoplasmic reticulum. The protein localises to the cell membrane. Its subcellular location is the membrane. In terms of biological role, calcium-binding protein involved in different processes such as regulation of vesicular trafficking, plasma membrane Na(+)/H(+) exchanger and gene transcription. Involved in the constitutive exocytic membrane traffic. Mediates the association between microtubules and membrane-bound organelles of the endoplasmic reticulum and Golgi apparatus and is also required for the targeting and fusion of transcytotic vesicles (TCV) with the plasma membrane. Functions as an integral cofactor in cell pH regulation by controlling plasma membrane-type Na(+)/H(+) exchange activity. Affects the pH sensitivity of SLC9A1/NHE1 by increasing its sensitivity at acidic pH. Required for the stabilization and localization of SLC9A1/NHE1 at the plasma membranes. Inhibits serum- and GTPase-stimulated Na(+)/H(+) exchange. Plays a role as an inhibitor of ribosomal RNA transcription by repressing the nucleolar UBF1 transcriptional activity. May sequester UBF1 in the nucleoplasm and limit its translocation to the nucleolus. Associates to the ribosomal gene promoter. Acts as a negative regulator of the calcineurin/NFAT signaling pathway. Inhibits NFAT nuclear translocation and transcriptional activity by suppressing the calcium-dependent calcineurin phosphatase activity. Also negatively regulates the kinase activity of the apoptosis-induced kinase STK17B. Inhibits both STK17B auto- and substrate-phosphorylations in a calcium-dependent manner. The sequence is that of Calcineurin B homologous protein 1 (Chp1) from Mus musculus (Mouse).